A 443-amino-acid polypeptide reads, in one-letter code: ATP-dependent protease ATPase subunit HslU (443 aa).

ATP is bound by residues Ile18, 60-65 (GVGKTE), Asp256, Glu321, and Arg393.

The protein belongs to the ClpX chaperone family. HslU subfamily. As to quaternary structure, a double ring-shaped homohexamer of HslV is capped on each side by a ring-shaped HslU homohexamer. The assembly of the HslU/HslV complex is dependent on binding of ATP.

It is found in the cytoplasm. Its function is as follows. ATPase subunit of a proteasome-like degradation complex; this subunit has chaperone activity. The binding of ATP and its subsequent hydrolysis by HslU are essential for unfolding of protein substrates subsequently hydrolyzed by HslV. HslU recognizes the N-terminal part of its protein substrates and unfolds these before they are guided to HslV for hydrolysis. This chain is ATP-dependent protease ATPase subunit HslU, found in Buchnera aphidicola subsp. Acyrthosiphon pisum (strain APS) (Acyrthosiphon pisum symbiotic bacterium).